The primary structure comprises 337 residues: Manganese-dependent ADP-ribose/CDP-alcohol diphosphatase (337 aa).

Position 1 is an N-acetylmethionine (Met-1). Positions 25, 27, 74, 110, 241, 278, and 280 each coordinate Zn(2+).

Belongs to the ADPRibase-Mn family. As to quaternary structure, monomer. Mg(2+) is required as a cofactor.

It catalyses the reaction CDP-choline + H2O = phosphocholine + CMP + 2 H(+). The enzyme catalyses ADP-D-ribose + H2O = D-ribose 5-phosphate + AMP + 2 H(+). It carries out the reaction CDP-glycerol + H2O = sn-glycerol 3-phosphate + CMP + 2 H(+). Functionally, hydrolyzes ADP-ribose, IDP-ribose, CDP-glycerol, CDP-choline and CDP-ethanolamine, but not other non-reducing ADP-sugars or CDP-glucose. May be involved in immune cell signaling as suggested by the second-messenger role of ADP-ribose, which activates TRPM2 as a mediator of oxidative/nitrosative stress. The polypeptide is Manganese-dependent ADP-ribose/CDP-alcohol diphosphatase (ADPRM) (Bos taurus (Bovine)).